The chain runs to 251 residues: Hydroxyacylglutathione hydrolase (251 aa).

Zn(2+) is bound by residues His-53, His-55, Asp-57, His-58, His-110, Asp-127, and His-165.

This sequence belongs to the metallo-beta-lactamase superfamily. Glyoxalase II family. Monomer. Zn(2+) is required as a cofactor.

It catalyses the reaction an S-(2-hydroxyacyl)glutathione + H2O = a 2-hydroxy carboxylate + glutathione + H(+). Its pathway is secondary metabolite metabolism; methylglyoxal degradation; (R)-lactate from methylglyoxal: step 2/2. Its function is as follows. Thiolesterase that catalyzes the hydrolysis of S-D-lactoyl-glutathione to form glutathione and D-lactic acid. This Pectobacterium carotovorum subsp. carotovorum (strain PC1) protein is Hydroxyacylglutathione hydrolase.